A 430-amino-acid polypeptide reads, in one-letter code: Putative ABC transporter periplasmic-binding protein YcjN (430 aa).

An N-terminal signal peptide occupies residues 1–19 (MIKSKIVLLSALVSCALIS).

This sequence belongs to the bacterial solute-binding protein 1 family.

The protein resides in the periplasm. Probably part of the binding-protein-dependent transport system YcjNOP. The protein is Putative ABC transporter periplasmic-binding protein YcjN (ycjN) of Escherichia coli (strain K12).